Consider the following 1097-residue polypeptide: Platelet-derived growth factor receptor beta (1097 aa).

Positions 1–31 are cleaved as a signal peptide; sequence MGLPEVMPASVLRGQLLLFVLLLLGPQISQG. Ig-like C2-type domains lie at 32 to 119, 128 to 209, and 213 to 308; these read LVIT…YIFV, PMDS…YSLQ, and INVS…INVT. Residues 32 to 531 lie on the Extracellular side of the membrane; that stretch reads LVITPPGPEF…VVPHSLPFKV (500 aa). N-linked (GlcNAc...) asparagine glycosylation is found at Asn-44, Asn-88, and Asn-102. Cysteines 53 and 99 form a disulfide. A disulfide bond links Cys-148 and Cys-189. A glycan (N-linked (GlcNAc...) asparagine) is linked at Asn-214. Cys-234 and Cys-290 are disulfide-bonded. Asn-291, Asn-306, Asn-353, Asn-370, Asn-444, Asn-467, and Asn-478 each carry an N-linked (GlcNAc...) asparagine glycan. The region spanning 415 to 523 is the Ig-like C2-type 4 domain; the sequence is PVRVLELSES…GRDSQEVTVV (109 aa). Cys-435 and Cys-507 are disulfide-bonded. Residues 532–552 form a helical membrane-spanning segment; the sequence is VVISAILALVVLTVISLIILI. Residues 553–1097 are Cytoplasmic-facing; that stretch reads MLWQRKPRYE…PLAEAEDSFL (545 aa). Residues Tyr-561, Tyr-578, and Tyr-580 each carry the phosphotyrosine; by autocatalysis modification. The Protein kinase domain maps to 599–961; that stretch reads LVLGRTLGSG…QLVLLLERLL (363 aa). ATP-binding positions include 605–613 and Lys-633; that span reads LGSGAFGQV. A Phosphotyrosine; by ABL1 and ABL2 modification is found at Tyr-685. Tyr-715, Tyr-739, Tyr-750, Tyr-762, Tyr-770, Tyr-774, and Tyr-777 each carry phosphotyrosine; by autocatalysis. Asp-825 (proton acceptor) is an active-site residue. The residue at position 856 (Tyr-856) is a Phosphotyrosine; by autocatalysis. 2 positions are modified to phosphotyrosine; by ABL1 and ABL2: Tyr-933 and Tyr-969. Tyr-1008 and Tyr-1020 each carry phosphotyrosine; by autocatalysis. Positions 1016-1097 are disordered; it reads TDNDYIIPLP…PLAEAEDSFL (82 aa). Residues 1042–1059 are compositionally biased toward polar residues; the sequence is SLASSTLNEVNTSSTISC. Residues 1072-1081 show a composition bias toward low complexity; sequence EPEAQLEQPQ.

It belongs to the protein kinase superfamily. Tyr protein kinase family. CSF-1/PDGF receptor subfamily. Interacts with homodimeric PDGFB and PDGFD, and with heterodimers formed by PDGFA and PDGFB. May also interact with homodimeric PDGFC. Monomer in the absence of bound ligand. Interaction with homodimeric PDGFB, heterodimers formed by PDGFA and PDGFB or homodimeric PDGFD, leads to receptor dimerization, where both PDGFRA homodimers and heterodimers with PDGFRB are observed. Interacts with SH2B2/APS. Interacts directly (tyrosine phosphorylated) with SHB. Interacts (tyrosine phosphorylated) with PIK3R1 and RASA1. Interacts (tyrosine phosphorylated) with CBL. Interacts (tyrosine phosphorylated) with SRC and SRC family kinases. Interacts (tyrosine phosphorylated) with PIK3C2B, maybe indirectly. Interacts (tyrosine phosphorylated) with SHC1, GRB7, GRB10 and NCK1. Interaction with GRB2 is mediated by SHC1. Interacts (via C-terminus) with NHERF1. Post-translationally, N-glycosylated. Ubiquitinated. After autophosphorylation, the receptor is polyubiquitinated, leading to its degradation. In terms of processing, autophosphorylated on tyrosine residues upon ligand binding. Autophosphorylation occurs in trans, i.e. one subunit of the dimeric receptor phosphorylates tyrosine residues on the other subunit. Phosphorylation at Tyr-578, and to a lesser degree, Tyr-580 is important for interaction with SRC. Phosphorylation at Tyr-715 is important for interaction with GRB2. Phosphorylation at Tyr-739 and Tyr-750 is important for interaction with PIK3R1. Phosphorylation at Tyr-750 is important for interaction with NCK1. Phosphorylation at Tyr-770 and Tyr-856 is important for interaction with RASA1/GAP. Phosphorylation at Tyr-856 is important for efficient phosphorylation of PLCG1 and PTPN11, resulting in increased phosphorylation of AKT1, MAPK1/ERK2 and/or MAPK3/ERK1, PDCD6IP/ALIX and STAM, and in increased cell proliferation. Phosphorylation at Tyr-1008 is important for interaction with PTPN11. Phosphorylation at Tyr-1008 and Tyr-1020 is important for interaction with PLCG1. Dephosphorylated by PTPRJ at Tyr-750, Tyr-856, Tyr-1008 and Tyr-1020. Dephosphorylated by PTPN2 at Tyr-578 and Tyr-1020.

It is found in the cell membrane. It localises to the cytoplasmic vesicle. The protein localises to the lysosome lumen. The enzyme catalyses L-tyrosyl-[protein] + ATP = O-phospho-L-tyrosyl-[protein] + ADP + H(+). With respect to regulation, present in an inactive conformation in the absence of bound ligand. Binding of PDGFB and/or PDGFD leads to dimerization and activation by autophosphorylation on tyrosine residues. In terms of biological role, tyrosine-protein kinase that acts as a cell-surface receptor for homodimeric PDGFB and PDGFD and for heterodimers formed by PDGFA and PDGFB, and plays an essential role in the regulation of embryonic development, cell proliferation, survival, differentiation, chemotaxis and migration. Plays an essential role in blood vessel development by promoting proliferation, migration and recruitment of pericytes and smooth muscle cells to endothelial cells. Plays a role in the migration of vascular smooth muscle cells and the formation of neointima at vascular injury sites. Required for normal development of the cardiovascular system. Required for normal recruitment of pericytes (mesangial cells) in the kidney glomerulus, and for normal formation of a branched network of capillaries in kidney glomeruli. Promotes rearrangement of the actin cytoskeleton and the formation of membrane ruffles. Binding of its cognate ligands - homodimeric PDGFB, heterodimers formed by PDGFA and PDGFB or homodimeric PDGFD -leads to the activation of several signaling cascades; the response depends on the nature of the bound ligand and is modulated by the formation of heterodimers between PDGFRA and PDGFRB. Phosphorylates PLCG1, PIK3R1, PTPN11, RASA1/GAP, CBL, SHC1 and NCK1. Activation of PLCG1 leads to the production of the cellular signaling molecules diacylglycerol and inositol 1,4,5-trisphosphate, mobilization of cytosolic Ca(2+) and the activation of protein kinase C. Phosphorylation of PIK3R1, the regulatory subunit of phosphatidylinositol 3-kinase, leads to the activation of the AKT1 signaling pathway. Phosphorylation of SHC1, or of the C-terminus of PTPN11, creates a binding site for GRB2, resulting in the activation of HRAS, RAF1 and down-stream MAP kinases, including MAPK1/ERK2 and/or MAPK3/ERK1. Promotes phosphorylation and activation of SRC family kinases. Promotes phosphorylation of PDCD6IP/ALIX and STAM. Receptor signaling is down-regulated by protein phosphatases that dephosphorylate the receptor and its down-stream effectors, and by rapid internalization of the activated receptor. This is Platelet-derived growth factor receptor beta (Pdgfrb) from Rattus norvegicus (Rat).